We begin with the raw amino-acid sequence, 355 residues long: Protein ATP1B4 (355 aa).

At 1–108 (MRRQLRSRRA…SLARTGQSWS (108 aa)) the chain is on the nuclear side. Residues 33–77 (ADEEEEAEEEARVMVVPDLEEEEEEEEEKEEEEKEEEDSHSQETD) are disordered. Acidic residues predominate over residues 50 to 68 (DLEEEEEEEEEKEEEEKEE). Residues 109 to 129 (LILVIYFFFYASLAAVITLCM) form a helical; Signal-anchor for type II membrane protein membrane-spanning segment. Residues 130 to 355 (YTLFLTISPY…RVIFTLNIET (226 aa)) lie on the Perinuclear space side of the membrane.

This sequence belongs to the X(+)/potassium ATPases subunit beta family. In terms of assembly, associates with a SMAD7-transcriptional complex. Interacts with SNW1 and TOR1AIP1. Does not associate with known Na,K-ATPase alpha-subunits.

The protein localises to the nucleus inner membrane. In terms of biological role, may act as a transcriptional coregulator during muscle development through its interaction with SNW1. Has lost its ancestral function as a Na,K-ATPase beta-subunit. The polypeptide is Protein ATP1B4 (ATP1B4) (Bos taurus (Bovine)).